We begin with the raw amino-acid sequence, 896 residues long: NEDD4-binding protein 1 (896 aa).

The 85-residue stretch at 59–143 (QEAVHSAKEY…IQQFVKLFEN (85 aa)) folds into the KH-like domain. The residue at position 226 (Ser-226) is a Phosphoserine. Phosphothreonine is present on Thr-242. Phosphoserine occurs at positions 258 and 300. 2 disordered regions span residues 403-430 (YPET…PKKT) and 488-507 (ETDG…VNFV). Positions 414-430 (VYSSTNELTTDSTPKKT) are enriched in polar residues. Phosphoserine is present on Ser-562. An RNase NYN domain is found at 617-769 (LKHIVIDGSN…LGRSGPRLEE (153 aa)). The interval 801–821 (GTQAASTSHQPPTRIQGAPSS) is disordered. Residues 803 to 813 (QAASTSHQPPT) show a composition bias toward polar residues. A coCUN region spans residues 849-896 (RSSAETNELREALLKIFPDSEQRLKIDQILVAHPYMKDLNALSAMVLD).

It belongs to the N4BP1 family. As to quaternary structure, interacts with NEDD4. Interacts with ITCH (via WW domain 2). Proteolytically cleaved by CASP8 downstream of TLR3 or TLR4, leading to its inactivation. Mainly cleaved at Asp-490 by CASP8. Cleaved by caspase-like protein MALT1 in T-cells following TCR-mediated activation, leading to its inactivation and subsequent viral reactivation during HIV-1 infection. Post-translationally, mono- and polyubiquitinated on the CoCUN region. Monoubiquitinated by NEDD4. Polyubiquitinated, leading to its degradation by the proteasome. Sumoylated with SUMO1, abrogating polyubiquitination and subsequent degradation. Desumoylated by SENP1, leading to accumulation in PML nuclear bodies. In terms of tissue distribution, detected in heart, lung, brain, liver, skeletal muscle, pancreas, kidney, spleen, testis and ovary.

The protein localises to the cytoplasm. The protein resides in the cytosol. It is found in the nucleus. Its subcellular location is the nucleolus. It localises to the PML body. Proteolytic cleavage by CASP8 or MALT1 leads to its inactivation. Potent suppressor of cytokine production that acts as a regulator of innate immune signaling and inflammation. Acts as a key negative regulator of select cytokine and chemokine responses elicited by TRIF-independent Toll-like receptors (TLRs), thereby limiting inflammatory cytokine responses to minor insults. In response to more threatening pathogens, cleaved by CASP8 downstream of TLR3 or TLR4, leading to its inactivation, thereby allowing production of inflammatory cytokines. Acts as a restriction factor against some viruses, such as HIV-1: restricts HIV-1 replication by binding to HIV-1 mRNAs and mediating their degradation via its ribonuclease activity. Also acts as an inhibitor of the E3 ubiquitin-protein ligase ITCH: acts by interacting with the second WW domain of ITCH, leading to compete with ITCH's substrates and impairing ubiquitination of substrates. This Homo sapiens (Human) protein is NEDD4-binding protein 1.